The chain runs to 224 residues: Adenylate kinase (224 aa).

Gly10–Thr15 serves as a coordination point for ATP. An NMP region spans residues Glu30 to Val59. Residues Ser31, Arg36, Asp57–Val59, Gly85–Arg88, and Gln92 contribute to the AMP site. Residues Gly126–Asp165 form an LID region. Arg127 is a binding site for ATP. Arg162 and Arg174 together coordinate AMP. Position 211 (Asn211) interacts with ATP.

The protein belongs to the adenylate kinase family. As to quaternary structure, monomer.

The protein resides in the cytoplasm. The catalysed reaction is AMP + ATP = 2 ADP. The protein operates within purine metabolism; AMP biosynthesis via salvage pathway; AMP from ADP: step 1/1. Functionally, catalyzes the reversible transfer of the terminal phosphate group between ATP and AMP. Plays an important role in cellular energy homeostasis and in adenine nucleotide metabolism. The chain is Adenylate kinase from Desulforapulum autotrophicum (strain ATCC 43914 / DSM 3382 / VKM B-1955 / HRM2) (Desulfobacterium autotrophicum).